The following is a 134-amino-acid chain: Mini-ribonuclease 3 (134 aa).

Asp-23 is a catalytic residue.

This sequence belongs to the MrnC RNase family. Homodimer. It depends on Mg(2+) as a cofactor.

The protein localises to the cytoplasm. Its function is as follows. Involved in correct processing of both the 5' and 3' ends of 23S rRNA precursor. Processes 30S rRNA precursor transcript even in absence of ribonuclease 3 (Rnc); Rnc processes 30S rRNA into smaller rRNA precursors. This Brevibacillus brevis (strain 47 / JCM 6285 / NBRC 100599) protein is Mini-ribonuclease 3.